A 110-amino-acid chain; its full sequence is MATPLFFTDNAVAKVRELIEEEENPDLKLRVFVTGGGCSGFQYGFSFDESQEEDDTVIERDGVKLLVDSMSYQYLVGATIDYQEGLQGSQFVVQNPNASSTCGCGSSFSI.

Positions 38, 102, and 104 each coordinate iron-sulfur cluster.

The protein belongs to the HesB/IscA family. In terms of assembly, homodimer. Iron-sulfur cluster serves as cofactor.

Its function is as follows. Required for insertion of 4Fe-4S clusters for at least IspG. The protein is Iron-sulfur cluster insertion protein ErpA of Marinobacter nauticus (strain ATCC 700491 / DSM 11845 / VT8) (Marinobacter aquaeolei).